We begin with the raw amino-acid sequence, 237 residues long: Purine nucleoside phosphorylase DeoD-type (237 aa).

An a purine D-ribonucleoside-binding site is contributed by histidine 4. Phosphate is bound by residues glycine 20, arginine 24, arginine 43, and 87–90 (RVGT). A purine D-ribonucleoside contacts are provided by residues 179–181 (EME) and 203–204 (SD). Aspartate 204 functions as the Proton donor in the catalytic mechanism.

This sequence belongs to the PNP/UDP phosphorylase family. Homohexamer; trimer of homodimers.

The enzyme catalyses a purine D-ribonucleoside + phosphate = a purine nucleobase + alpha-D-ribose 1-phosphate. The catalysed reaction is a purine 2'-deoxy-D-ribonucleoside + phosphate = a purine nucleobase + 2-deoxy-alpha-D-ribose 1-phosphate. Its function is as follows. Catalyzes the reversible phosphorolytic breakdown of the N-glycosidic bond in the beta-(deoxy)ribonucleoside molecules, with the formation of the corresponding free purine bases and pentose-1-phosphate. In Streptococcus gordonii (strain Challis / ATCC 35105 / BCRC 15272 / CH1 / DL1 / V288), this protein is Purine nucleoside phosphorylase DeoD-type.